The primary structure comprises 223 residues: Ubiquitin carboxyl-terminal hydrolase isozyme L1 (223 aa).

Residue methionine 1 is modified to N-acetylmethionine. The UCH catalytic domain maps to 2–221 (QLKPMEINPE…VRFSAVALCK (220 aa)). The interaction with ubiquitin stretch occupies residues 5–10 (PMEINP). Cysteine 90 serves as the catalytic Nucleophile. At serine 125 the chain carries Phosphoserine. Residue histidine 161 is the Proton donor of the active site. Positions 211–216 (EVRFSA) are interaction with ubiquitin. The S-farnesyl cysteine moiety is linked to residue cysteine 220. The propeptide at 221–223 (KAA) is removed in mature form.

The protein belongs to the peptidase C12 family. In terms of assembly, monomer. Homodimer. Interacts with SNCA. Interacts with COPS5. In terms of processing, O-glycosylated. In terms of tissue distribution, found in neuronal cell bodies and processes throughout the neocortex (at protein level). Expressed in neurons and cells of the diffuse neuroendocrine system and their tumors. Weakly expressed in ovary. Down-regulated in brains from Parkinson disease and Alzheimer disease patients.

It localises to the cytoplasm. It is found in the endoplasmic reticulum membrane. It carries out the reaction Thiol-dependent hydrolysis of ester, thioester, amide, peptide and isopeptide bonds formed by the C-terminal Gly of ubiquitin (a 76-residue protein attached to proteins as an intracellular targeting signal).. Its function is as follows. Deubiquitinase that plays a role in the regulation of several processes such as maintenance of synaptic function, cardiac function, inflammatory response or osteoclastogenesis. Abrogates the ubiquitination of multiple proteins including WWTR1/TAZ, EGFR, HIF1A and beta-site amyloid precursor protein cleaving enzyme 1/BACE1. In addition, recognizes and hydrolyzes a peptide bond at the C-terminal glycine of ubiquitin to maintain a stable pool of monoubiquitin that is a key requirement for the ubiquitin-proteasome and the autophagy-lysosome pathways. Regulates amyloid precursor protein/APP processing by promoting BACE1 degradation resulting in decreased amyloid beta production. Plays a role in the immune response by regulating the ability of MHC I molecules to reach cross-presentation compartments competent for generating Ag-MHC I complexes. Mediates the 'Lys-48'-linked deubiquitination of the transcriptional coactivator WWTR1/TAZ leading to its stabilization and inhibition of osteoclastogenesis. Deubiquitinates and stabilizes epidermal growth factor receptor EGFR to prevent its degradation and to activate its downstream mediators. Modulates oxidative activity in skeletal muscle by regulating key mitochondrial oxidative proteins. Enhances the activity of hypoxia-inducible factor 1-alpha/HIF1A by abrogateing its VHL E3 ligase-mediated ubiquitination and consequently inhibiting its degradation. The chain is Ubiquitin carboxyl-terminal hydrolase isozyme L1 (UCHL1) from Homo sapiens (Human).